The sequence spans 99 residues: Cell division protein FtsB (99 aa).

Over Met-1–Phe-3 the chain is Cytoplasmic. A helical transmembrane segment spans residues Phe-4 to Ser-21. Over Gly-22–Gln-99 the chain is Periplasmic. Residues Val-31–Asn-73 are a coiled coil.

It belongs to the FtsB family. In terms of assembly, part of a complex composed of FtsB, FtsL and FtsQ.

The protein resides in the cell inner membrane. In terms of biological role, essential cell division protein. May link together the upstream cell division proteins, which are predominantly cytoplasmic, with the downstream cell division proteins, which are predominantly periplasmic. The chain is Cell division protein FtsB from Shewanella sp. (strain MR-4).